A 363-amino-acid chain; its full sequence is Histidinol-phosphate aminotransferase (363 aa).

Lys-215 bears the N6-(pyridoxal phosphate)lysine mark.

It belongs to the class-II pyridoxal-phosphate-dependent aminotransferase family. Histidinol-phosphate aminotransferase subfamily. In terms of assembly, homodimer. It depends on pyridoxal 5'-phosphate as a cofactor.

The catalysed reaction is L-histidinol phosphate + 2-oxoglutarate = 3-(imidazol-4-yl)-2-oxopropyl phosphate + L-glutamate. It participates in amino-acid biosynthesis; L-histidine biosynthesis; L-histidine from 5-phospho-alpha-D-ribose 1-diphosphate: step 7/9. This chain is Histidinol-phosphate aminotransferase, found in Buchnera aphidicola subsp. Diuraphis noxia.